The sequence spans 181 residues: Oligoribonuclease (181 aa).

The 164-residue stretch at 8–171 (LIWVDLEMTG…DDIHDSIAEL (164 aa)) folds into the Exonuclease domain. Tyr129 is a catalytic residue.

The protein belongs to the oligoribonuclease family.

It localises to the cytoplasm. Its function is as follows. 3'-to-5' exoribonuclease specific for small oligoribonucleotides. The protein is Oligoribonuclease of Photobacterium profundum (strain SS9).